Here is a 302-residue protein sequence, read N- to C-terminus: Ribosomal RNA small subunit methyltransferase H (302 aa).

S-adenosyl-L-methionine contacts are provided by residues 36–38 (GGH), D56, F84, D99, and Q106.

The protein belongs to the methyltransferase superfamily. RsmH family.

It localises to the cytoplasm. It carries out the reaction cytidine(1402) in 16S rRNA + S-adenosyl-L-methionine = N(4)-methylcytidine(1402) in 16S rRNA + S-adenosyl-L-homocysteine + H(+). Specifically methylates the N4 position of cytidine in position 1402 (C1402) of 16S rRNA. The chain is Ribosomal RNA small subunit methyltransferase H from Christiangramia forsetii (strain DSM 17595 / CGMCC 1.15422 / KT0803) (Gramella forsetii).